The chain runs to 103 residues: Large ribosomal subunit protein uL24 (103 aa).

It belongs to the universal ribosomal protein uL24 family. As to quaternary structure, part of the 50S ribosomal subunit.

In terms of biological role, one of two assembly initiator proteins, it binds directly to the 5'-end of the 23S rRNA, where it nucleates assembly of the 50S subunit. Functionally, one of the proteins that surrounds the polypeptide exit tunnel on the outside of the subunit. This chain is Large ribosomal subunit protein uL24, found in Endomicrobium trichonymphae.